The primary structure comprises 241 residues: 1-(5-phosphoribosyl)-5-[(5-phosphoribosylamino)methylideneamino] imidazole-4-carboxamide isomerase (241 aa).

Asp8 (proton acceptor) is an active-site residue. Asp129 functions as the Proton donor in the catalytic mechanism.

This sequence belongs to the HisA/HisF family.

The protein localises to the cytoplasm. It carries out the reaction 1-(5-phospho-beta-D-ribosyl)-5-[(5-phospho-beta-D-ribosylamino)methylideneamino]imidazole-4-carboxamide = 5-[(5-phospho-1-deoxy-D-ribulos-1-ylimino)methylamino]-1-(5-phospho-beta-D-ribosyl)imidazole-4-carboxamide. Its pathway is amino-acid biosynthesis; L-histidine biosynthesis; L-histidine from 5-phospho-alpha-D-ribose 1-diphosphate: step 4/9. This chain is 1-(5-phosphoribosyl)-5-[(5-phosphoribosylamino)methylideneamino] imidazole-4-carboxamide isomerase, found in Chloroflexus aurantiacus (strain ATCC 29364 / DSM 637 / Y-400-fl).